The primary structure comprises 301 residues: Aspartate carbamoyltransferase catalytic subunit (301 aa).

Carbamoyl phosphate-binding residues include Arg46 and Thr47. Residue Lys74 participates in L-aspartate binding. Positions 96, 124, and 127 each coordinate carbamoyl phosphate. L-aspartate is bound by residues Arg157 and Arg208. Ala249 and Pro250 together coordinate carbamoyl phosphate.

The protein belongs to the aspartate/ornithine carbamoyltransferase superfamily. ATCase family. Heterododecamer (2C3:3R2) of six catalytic PyrB chains organized as two trimers (C3), and six regulatory PyrI chains organized as three dimers (R2).

The catalysed reaction is carbamoyl phosphate + L-aspartate = N-carbamoyl-L-aspartate + phosphate + H(+). It functions in the pathway pyrimidine metabolism; UMP biosynthesis via de novo pathway; (S)-dihydroorotate from bicarbonate: step 2/3. Functionally, catalyzes the condensation of carbamoyl phosphate and aspartate to form carbamoyl aspartate and inorganic phosphate, the committed step in the de novo pyrimidine nucleotide biosynthesis pathway. This chain is Aspartate carbamoyltransferase catalytic subunit, found in Bacillus cereus (strain ATCC 14579 / DSM 31 / CCUG 7414 / JCM 2152 / NBRC 15305 / NCIMB 9373 / NCTC 2599 / NRRL B-3711).